The sequence spans 1440 residues: MGKTYSSPINPIPKAPKGLAIHHWLNFLQAAYRLQPGPSEFDFHQLRKFLKLAIKTPVWLNPINYSVLAGLIPKNYPGRVHEIVAILIQETPAREAPPSAPLAEDPQKPPPYPEQAQEASQCLPILHPHGAPAAHRPWQMKDLQAIKQEVSSSAPGSPQFMQTIRLAVQQFDPTAKDLHDLLQYLCSSLVASLHHQQLETLIAQAETQGITGYNPLAGPLRIQANNPNQQGLRKEYQNLWLSAFSALPGNTKDPTWAAILQGPEEPFGSFVERLNVALDNGLPEGTPKDPILRSLAYSNANKECQKLLQARGQTNSPLGEMLRACQTWTPRDKNKILMVQPKKTPPPNQPCFRCGQVGHWSRDCKQPRPPPGPCPVCQDPTHWKRDCPQLKTDTRDSEDLLLDLPCEAPNVRERKNLLRGGGLASPRTILPLIPLSQQKQPTLHIQVSFSNTPPVSVQALLDTGADITVLPACLCPPDSNLQDTTVLGAGGPSTNKFKILPCPVHIHLPFRRQPVTLTACLIDINNQWTILGRDALQQCQSSLYLADQPSKVLPVLAPKLIGLEHLPPPPEVSQFPLNPERLQALTDLVSRALEAKHIEPYQGPGNNPIFPVKKPNGKWRFIHDLRATNSVTRDLASPSPGPPDLTSLPQGLPHLRTIDLTDAFFQIPLPTIFQPYFAFTLPQPNNYGPGTRYSWRVLPQGFKNSPTLFEQQLSHILTPVRKTFPNSLIIQYMDDILLASPAPGELAALTDKVTNALTKEGLPLSPEKTQATPGPIHFLGQVISQDCITYETLPSINVKSTWSLAELQSMLGELQWVSKGTPVLRSSLHQLYLALRGHRDPRDTIKLTSIQVQALRTIQKALTLNCRSRLVNQLPILALIMLRPTGTTAVLFQTKQKWPLVWLHTPHPATSLRPWGQLLANAVIILDKYSLQHYGQVCKSFHHNISNQALTYYLHTSDQSSVAILLQHSHRFHNLGAQPSGPWRSLLQMPQIFQNIDVLRPPFTISPVVINHAPCLFSDGSASKAAFIIWDRQVIHQQVLSLPSTCSAQAGELFGLLAGLQKSQPWVALNIFLDSKFLIGHLRRMALGAFPGPSTQCELHTQLLPLLQGKTVYVHHVRSHTLLQDPISRLNEATDALMLAPLLPLDPTTLHQLTHCNPYALRNHGATASEAHAIVQACHTCKVINPQGRLPQGYIRRGHAPNDIWQGDVTHLQYKRYKYCLLVWVDTYSGAVSVSCRRKETGSDCVASLLVAISILGKPQNINTDNGAAYLSQEFQQFCNSLAIKHSTHIPYNPTSSGLVERTNGILKTLISKYLLDNHHLPLETAVSKSLWTINHLNVLPSCQKTRWQLHQAQPLPPVPEDTLPPHTSPKWYYYKIPGLTNSRWSGPVQSLKEAAGAALIPVGGSYLWIPWRLLKRGICPRPESSAAVDPKTRDHQLHG.

G2 is lipidated: N-myristoyl glycine; by host. The interval 95–116 (EAPPSAPLAEDPQKPPPYPEQA) is disordered. Residues 98–101 (PSAP) carry the PTAP/PSAP motif motif. Residues 109–112 (PPPY) carry the PPXY motif motif. 2 consecutive CCHC-type zinc fingers follow at residues 349–366 (QPCF…DCKQ) and 372–389 (GPCP…DCPQ). The Peptidase A2 domain occupies 457 to 535 (VQALLDTGAD…NQWTILGRDA (79 aa)). D462 serves as the catalytic For protease activity; shared with dimeric partner. Positions 593–783 (LEAKHIEPYQ…GPIHFLGQVI (191 aa)) constitute a Reverse transcriptase domain. 9 residues coordinate Mg(2+): D659, D734, D735, D1019, E1052, D1074, D1135, D1208, and D1265. Positions 1010–1143 (INHAPCLFSD…TDALMLAPLL (134 aa)) constitute an RNase H type-1 domain. Residues 1197 to 1366 (RGHAPNDIWQ…PPVPEDTLPP (170 aa)) form the Integrase catalytic domain. Positions 1371-1420 (KWYYYKIPGLTNSRWSGPVQSLKEAAGAALIPVGGSYLWIPWRLLKRGIC) form a DNA-binding region, integrase-type.

As to quaternary structure, interacts with human TSG101. This interaction is essential for budding and release of viral particles. Mg(2+) serves as cofactor. Post-translationally, specific enzymatic cleavages by the viral protease yield mature proteins. The polyprotein is cleaved during and after budding, this process is termed maturation. The protease is autoproteolytically processed at its N- and C-termini.

It is found in the virion. It catalyses the reaction Endonucleolytic cleavage to 5'-phosphomonoester.. It carries out the reaction DNA(n) + a 2'-deoxyribonucleoside 5'-triphosphate = DNA(n+1) + diphosphate. Functionally, matrix protein p19 targets Gag, Gag-Pro and Gag-Pro-Pol polyproteins to the plasma membrane via a multipartite membrane binding signal, that includes its myristoylated N-terminus. Also mediates nuclear localization of the preintegration complex. Capsid protein p24 forms the conical core of the virus that encapsulates the genomic RNA-nucleocapsid complex. In terms of biological role, nucleocapsid protein p15 is involved in the packaging and encapsidation of two copies of the genome. Its function is as follows. The aspartyl protease mediates proteolytic cleavages of Gag, Gag-Pro and Gag-Pro-Pol polyproteins during or shortly after the release of the virion from the plasma membrane. Cleavages take place as an ordered, step-wise cascade to yield mature proteins. This process is called maturation. Displays maximal activity during the budding process just prior to particle release from the cell. Hydrolyzes host EIF4GI in order to shut off the capped cellular mRNA translation. The resulting inhibition of cellular protein synthesis serves to ensure maximal viral gene expression and to evade host immune response. Functionally, reverse transcriptase (RT) is a multifunctional enzyme that converts the viral RNA genome into dsDNA in the cytoplasm, shortly after virus entry into the cell. This enzyme displays a DNA polymerase activity that can copy either DNA or RNA templates, and a ribonuclease H (RNase H) activity that cleaves the RNA strand of RNA-DNA heteroduplexes in a partially processive 3' to 5'-endonucleasic mode. Conversion of viral genomic RNA into dsDNA requires many steps. A tRNA-Pro binds to the primer-binding site (PBS) situated at the 5'-end of the viral RNA. RT uses the 3' end of the tRNA primer to perform a short round of RNA-dependent minus-strand DNA synthesis. The reading proceeds through the U5 region and ends after the repeated (R) region which is present at both ends of viral RNA. The portion of the RNA-DNA heteroduplex is digested by the RNase H, resulting in a ssDNA product attached to the tRNA primer. This ssDNA/tRNA hybridizes with the identical R region situated at the 3' end of viral RNA. This template exchange, known as minus-strand DNA strong stop transfer, can be either intra- or intermolecular. RT uses the 3' end of this newly synthesized short ssDNA to perform the RNA-dependent minus-strand DNA synthesis of the whole template. RNase H digests the RNA template except for a polypurine tract (PPT) situated at the 5' end of the genome. It is not clear if both polymerase and RNase H activities are simultaneous. RNase H probably can proceed both in a polymerase-dependent (RNA cut into small fragments by the same RT performing DNA synthesis) and a polymerase-independent mode (cleavage of remaining RNA fragments by free RTs). Secondly, RT performs DNA-directed plus-strand DNA synthesis using the PPT that has not been removed by RNase H as primer. PPT and tRNA primers are then removed by RNase H. The 3' and 5' ssDNA PBS regions hybridize to form a circular dsDNA intermediate. Strand displacement synthesis by RT to the PBS and PPT ends produces a blunt ended, linear dsDNA copy of the viral genome that includes long terminal repeats (LTRs) at both ends. Integrase catalyzes viral DNA integration into the host chromosome, by performing a series of DNA cutting and joining reactions. This enzyme activity takes place after virion entry into a cell and reverse transcription of the RNA genome in dsDNA. The first step in the integration process is 3' processing. This step requires a complex comprising the viral genome, matrix protein, and integrase. This complex is called the pre-integration complex (PIC). The integrase protein removes 2 nucleotides from each 3' end of the viral DNA, leaving recessed dinucleotides OH's at the 3' ends. In the second step, the PIC access cell chromosomes during cell division. The third step, termed strand transfer, the integrase protein joins the previously processed 3' ends to the 5'-ends of strands of target cellular DNA at the site of integration. The 5'-ends are produced by integrase-catalyzed staggered cuts, 5 bp apart. A Y-shaped, gapped, recombination intermediate results, with the 5'-ends of the viral DNA strands and the 3' ends of target DNA strands remaining unjoined, flanking a gap of 5 bp. The last step is viral DNA integration into host chromosome. This involves host DNA repair synthesis in which the 5 bp gaps between the unjoined strands (see above) are filled in and then ligated. This Human T-cell leukemia virus 3 (strain 2026ND) (HTLV-3) protein is Gag-Pro-Pol polyprotein (gag-pro-pol).